A 376-amino-acid polypeptide reads, in one-letter code: MMKLLLVVATSVALIFSVTDLSGEGPKHGGESMLTVQIPDFRLIPTTGALGPESFVFDFFGDGPYTGLSDGRIVKWLANESRWIDFAVTTSAREGCEGPHEHQRTEHVCGRPLGLAFDKSTGDLYIADAYMGLLKVGPTGGVATQVLPRELNEALRFTNSLDINPRTGVVYFTDSSSVYQRRNYIGAMMSGDKTGRLMKYDNTKQVTTLLSNLAFVNGVALSQNGDYLLVVETAMCRILRYWLNETSVKSQSHDNYEIFAEGLPGFPDNIKRSPRGGFWVGLNTKHSKLTKFAMSNAWLGRAALGLPVDWMKVHSVWARYNGNGMAVRLSEDSGVILEVFEGKNENKWISISEVEEKDGTLWVGSVNTPFAGMYKI.

Residues 1-23 form the signal peptide; the sequence is MMKLLLVVATSVALIFSVTDLSG. Residues N79 and N244 are each glycosylated (N-linked (GlcNAc...) asparagine).

The protein belongs to the strictosidine synthase family.

The protein resides in the vacuole. This is Protein STRICTOSIDINE SYNTHASE-LIKE 2 from Arabidopsis thaliana (Mouse-ear cress).